Reading from the N-terminus, the 1037-residue chain is Ephrin type-A receptor 5 (1037 aa).

Positions 1–24 (MRGSGPRGAGRRRPPSGGGDTPIT) are cleaved as a signal peptide. Residues 1–24 (MRGSGPRGAGRRRPPSGGGDTPIT) form a disordered region. The Extracellular segment spans residues 25 to 573 (PASLAGCYSA…AASSDQSQIP (549 aa)). One can recognise an Eph LBD domain in the interval 60-238 (EVNLLDSRTV…YYKKCPSVVR (179 aa)). Residues Asn-264, Asn-299, Asn-369, Asn-423, Asn-436, and Asn-461 are each glycosylated (N-linked (GlcNAc...) asparagine). Fibronectin type-III domains lie at 357–467 (PPSA…TNQA) and 468–562 (APSP…TTPV). The chain crosses the membrane as a helical span at residues 574–594 (VIAVSVTVGVILLAVVIGVLL). Over 595-1037 (SGSCCECGCG…VQLVNGMVPL (443 aa)) the chain is Cytoplasmic. Phosphotyrosine; by autocatalysis is present on residues Tyr-650 and Tyr-656. A Protein kinase domain is found at 675–936 (ITIERVIGAG…EIVNMLDKLI (262 aa)). ATP contacts are provided by residues 681-689 (IGAGEFGEV) and Lys-707. Asp-800 functions as the Proton acceptor in the catalytic mechanism. Residues Tyr-833 and Tyr-982 each carry the phosphotyrosine; by autocatalysis modification. One can recognise an SAM domain in the interval 965–1029 (GAYRSVGEWL…MNSLQEMKVQ (65 aa)). The short motif at 1035-1037 (VPL) is the PDZ-binding element.

Belongs to the protein kinase superfamily. Tyr protein kinase family. Ephrin receptor subfamily. Heterotetramer upon binding of the ligand. The heterotetramer is composed of an ephrin dimer and a receptor dimer. Oligomerization is probably required to induce biological responses. Interacts (via SAM domain) with SAMD5 (via SAM domain). In terms of processing, phosphorylated. Phosphorylation is stimulated by the ligand EFNA5. Dephosphorylation upon stimulation by glucose, inhibits EPHA5 forward signaling and results in insulin secretion. In terms of tissue distribution, almost exclusively expressed in the nervous system in cortical neurons, cerebellar Purkinje cells and pyramidal neurons within the cortex and hippocampus. Display an increasing gradient of expression from the forebrain to hindbrain and spinal cord.

The protein localises to the cell membrane. It is found in the cell projection. The protein resides in the axon. Its subcellular location is the dendrite. The catalysed reaction is L-tyrosyl-[protein] + ATP = O-phospho-L-tyrosyl-[protein] + ADP + H(+). Its function is as follows. Receptor tyrosine kinase which binds promiscuously GPI-anchored ephrin-A family ligands residing on adjacent cells, leading to contact-dependent bidirectional signaling into neighboring cells. The signaling pathway downstream of the receptor is referred to as forward signaling while the signaling pathway downstream of the ephrin ligand is referred to as reverse signaling. Among GPI-anchored ephrin-A ligands, EFNA5 most probably constitutes the cognate/functional ligand for EPHA5. Functions as an axon guidance molecule during development and may be involved in the development of the retinotectal, entorhino-hippocampal and hippocamposeptal pathways. Together with EFNA5 plays also a role in synaptic plasticity in adult brain through regulation of synaptogenesis. In addition to its function in the nervous system, the interaction of EPHA5 with EFNA5 mediates communication between pancreatic islet cells to regulate glucose-stimulated insulin secretion. In Homo sapiens (Human), this protein is Ephrin type-A receptor 5 (EPHA5).